A 64-amino-acid chain; its full sequence is Large ribosomal subunit protein bL35 (64 aa).

2 stretches are compositionally biased toward basic residues: residues 1–15 (MPKN…KRFK) and 27–42 (AGKR…KKTR). The tract at residues 1 to 45 (MPKNKTHSGASKRFKITGSGKVLRERAGKRHLLEHKSSKKTRSLT) is disordered.

It belongs to the bacterial ribosomal protein bL35 family.

The protein is Large ribosomal subunit protein bL35 of Streptomyces griseus subsp. griseus (strain JCM 4626 / CBS 651.72 / NBRC 13350 / KCC S-0626 / ISP 5235).